The sequence spans 442 residues: Cytochrome c biogenesis protein CcsB (442 aa).

The next 3 membrane-spanning stretches (helical) occupy residues 17–37, 76–96, and 162–182; these read LRLAILLLLVIAIASMAGTVI, TPWYLTLLVLFGASLTACTLT, and LGPIVVHASMLLILLGGILGA.

Belongs to the Ccs1/CcsB family. As to quaternary structure, may interact with CcsA.

It localises to the cellular thylakoid membrane. In terms of biological role, required during biogenesis of c-type cytochromes (cytochrome c6 and cytochrome f) at the step of heme attachment. The polypeptide is Cytochrome c biogenesis protein CcsB (Thermosynechococcus vestitus (strain NIES-2133 / IAM M-273 / BP-1)).